A 202-amino-acid polypeptide reads, in one-letter code: Holliday junction branch migration complex subunit RuvA (202 aa).

The domain I stretch occupies residues 1–64 (MIGRLRGTLA…EDAQLLYGFA (64 aa)). Residues 65 to 143 (SKRERDFFRE…AWEAVPSMFA (79 aa)) are domain II. Positions 144-154 (LVPNQPDAPAP) are flexible linker. The segment at 154–202 (PVASAESDAVSALISLGYKPQEASKAVSAIKDKGLSSEDMIRRALKGMI) is domain III.

Belongs to the RuvA family. In terms of assembly, homotetramer. Forms an RuvA(8)-RuvB(12)-Holliday junction (HJ) complex. HJ DNA is sandwiched between 2 RuvA tetramers; dsDNA enters through RuvA and exits via RuvB. An RuvB hexamer assembles on each DNA strand where it exits the tetramer. Each RuvB hexamer is contacted by two RuvA subunits (via domain III) on 2 adjacent RuvB subunits; this complex drives branch migration. In the full resolvosome a probable DNA-RuvA(4)-RuvB(12)-RuvC(2) complex forms which resolves the HJ.

It localises to the cytoplasm. The RuvA-RuvB-RuvC complex processes Holliday junction (HJ) DNA during genetic recombination and DNA repair, while the RuvA-RuvB complex plays an important role in the rescue of blocked DNA replication forks via replication fork reversal (RFR). RuvA specifically binds to HJ cruciform DNA, conferring on it an open structure. The RuvB hexamer acts as an ATP-dependent pump, pulling dsDNA into and through the RuvAB complex. HJ branch migration allows RuvC to scan DNA until it finds its consensus sequence, where it cleaves and resolves the cruciform DNA. In Pseudomonas fluorescens (strain ATCC BAA-477 / NRRL B-23932 / Pf-5), this protein is Holliday junction branch migration complex subunit RuvA.